We begin with the raw amino-acid sequence, 534 residues long: CTP synthase (534 aa).

Residues 1–267 (MTKYIFVTGG…DQIVCDHLKL (267 aa)) are amidoligase domain. A CTP-binding site is contributed by Ser13. A UTP-binding site is contributed by Ser13. Residue 14 to 19 (SIGKGI) participates in ATP binding. Residue Tyr54 participates in L-glutamine binding. Asp71 serves as a coordination point for ATP. Residues Asp71 and Glu141 each coordinate Mg(2+). CTP is bound by residues 148-150 (DIE), 188-193 (KTKPTQ), and Lys224. Residues 188 to 193 (KTKPTQ) and Lys224 contribute to the UTP site. One can recognise a Glutamine amidotransferase type-1 domain in the interval 292-534 (KIALVGKYVE…FVTAAVENAK (243 aa)). Gly354 serves as a coordination point for L-glutamine. The active-site Nucleophile; for glutamine hydrolysis is Cys381. Residues 382 to 385 (LGMQ), Glu405, and Arg463 each bind L-glutamine. Residues His508 and Glu510 contribute to the active site.

This sequence belongs to the CTP synthase family. In terms of assembly, homotetramer.

It carries out the reaction UTP + L-glutamine + ATP + H2O = CTP + L-glutamate + ADP + phosphate + 2 H(+). It catalyses the reaction L-glutamine + H2O = L-glutamate + NH4(+). The catalysed reaction is UTP + NH4(+) + ATP = CTP + ADP + phosphate + 2 H(+). It participates in pyrimidine metabolism; CTP biosynthesis via de novo pathway; CTP from UDP: step 2/2. Allosterically activated by GTP, when glutamine is the substrate; GTP has no effect on the reaction when ammonia is the substrate. The allosteric effector GTP functions by stabilizing the protein conformation that binds the tetrahedral intermediate(s) formed during glutamine hydrolysis. Inhibited by the product CTP, via allosteric rather than competitive inhibition. In terms of biological role, catalyzes the ATP-dependent amination of UTP to CTP with either L-glutamine or ammonia as the source of nitrogen. Regulates intracellular CTP levels through interactions with the four ribonucleotide triphosphates. The chain is CTP synthase from Streptococcus thermophilus (strain ATCC BAA-250 / LMG 18311).